The following is a 446-amino-acid chain: Enolase (446 aa).

Substrate is bound by residues His164 and Glu173. Glu216 serves as the catalytic Proton donor. The Mg(2+) site is built by Asp251, Glu302, and Asp329. Residues Glu302 and Asp329 each coordinate substrate. Residue Lys354 is the Proton acceptor of the active site. Substrate is bound by residues 381-384 (SHRS) and Lys405.

The protein belongs to the enolase family. In terms of assembly, homodimer. Mg(2+) serves as cofactor.

Its subcellular location is the cytoplasm. It catalyses the reaction (2R)-2-phosphoglycerate = phosphoenolpyruvate + H2O. Its pathway is carbohydrate degradation; glycolysis; pyruvate from D-glyceraldehyde 3-phosphate: step 4/5. The protein is Enolase (ENO1) of Oryza sativa subsp. japonica (Rice).